We begin with the raw amino-acid sequence, 222 residues long: CEACAM1-like protein UL7 (222 aa).

N-linked (GlcNAc...) asparagine; by host glycans are attached at residues N50, N56, N60, N71, N105, N109, N125, N132, N147, N164, N168, and N189. The chain crosses the membrane as a helical span at residues 193–213 (LALVGVIVFIALIVVCIMGWW).

Belongs to the RL11 family. Interacts with host FLT3. Highly glycosylated.

The protein resides in the secreted. Its subcellular location is the host cell membrane. Plays a role in modulating the host immune response and affecting host cytokine production. Structurally and functionally homolog of host CEACAM1, induces endothelial cell angiogenesis. Ligands for host FLT3 receptor, activates the PI3K/AKT and MAPK/ERK pathways. In turn, triggers hematopoietic progenitor cell and monocyte differentiation leading to virus reactivation. The chain is CEACAM1-like protein UL7 (UL7) from Human cytomegalovirus (strain AD169) (HHV-5).